We begin with the raw amino-acid sequence, 274 residues long: Carboxy-S-adenosyl-L-methionine synthase (274 aa).

S-adenosyl-L-methionine-binding positions include Y59, 93-95, 149-150, N164, and R231; these read GCS and DI.

The protein belongs to the class I-like SAM-binding methyltransferase superfamily. Cx-SAM synthase family. Homodimer.

The catalysed reaction is prephenate + S-adenosyl-L-methionine = carboxy-S-adenosyl-L-methionine + 3-phenylpyruvate + H2O. Functionally, catalyzes the conversion of S-adenosyl-L-methionine (SAM) to carboxy-S-adenosyl-L-methionine (Cx-SAM). In Psychrobacter sp. (strain PRwf-1), this protein is Carboxy-S-adenosyl-L-methionine synthase.